Here is a 210-residue protein sequence, read N- to C-terminus: Transposable element activator uncharacterized 23 kDa protein (210 aa).

The segment covering 67-78 (SGRMGGPRRDGR) has biased composition (basic and acidic residues). Residues 67-87 (SGRMGGPRRDGRVASSGVEGG) form a disordered region.

This chain is Transposable element activator uncharacterized 23 kDa protein, found in Zea mays (Maize).